The chain runs to 343 residues: Thromboxane A2 receptor (343 aa).

Topologically, residues 1–29 are extracellular; it reads MWPNGSSLGPCFRPTNITLEERRLIASPW. N-linked (GlcNAc...) asparagine glycans are attached at residues N4 and N16. A helical transmembrane segment spans residues 30–52; sequence FAASFCVVGLASNLLALSVLAGA. The Cytoplasmic segment spans residues 53–66; that stretch reads RQGGSHTRSSFLTF. A helical transmembrane segment spans residues 67-87; that stretch reads LCGLVLTDFLGLLVTGAIVVS. Residues 88–106 are Extracellular-facing; it reads QHAALFEWHAVDPGCRLCR. A disulfide bridge links C105 with C183. A helical membrane pass occupies residues 107-128; that stretch reads FMGVVMIFFGLSPLLLGATMAS. The Cytoplasmic segment spans residues 129 to 149; it reads ERFLGITRPFSRPVVTSQRRA. A helical membrane pass occupies residues 150–172; that stretch reads WATVGLVWAAALALGLLPLLGLG. The Extracellular portion of the chain corresponds to 173-193; the sequence is RYTVQYPGSWCFLTLGAESGD. Residues 194 to 219 form a helical membrane-spanning segment; that stretch reads VAFGLLFSMLGGLSVGLSFLLNTVSV. Residues 220–246 are Cytoplasmic-facing; that stretch reads ATLCHVYHGQEAAQQRPRDSEVEMMAQ. Residues 247–270 traverse the membrane as a helical segment; sequence LLGIMLVASVCWLPLLVFIAQTVL. Over 271 to 289 the chain is Extracellular; it reads RNPPAMSPSGQLSRATEQE. A helical transmembrane segment spans residues 290–311; the sequence is LLIYLRVATWNQILDPWVYILF. Over 312-343 the chain is Cytoplasmic; it reads RRAVLRRLQPRLSTRPRSLSLQPQLTQRSGLQ. Phosphoserine occurs at positions 329 and 331.

It belongs to the G-protein coupled receptor 1 family. As to quaternary structure, interacts with RPGRIP1L. Interacts with RACK1; the interaction regulates TBXA2R cell surface expression.

The protein resides in the cell membrane. In terms of biological role, receptor for thromboxane A2 (TXA2), a potent stimulator of platelet aggregation. The activity of this receptor is mediated by a G-protein that activates a phosphatidylinositol-calcium second messenger system. In the kidney, the binding of TXA2 to glomerular TP receptors causes intense vasoconstriction. Activates phospholipase C and adenylyl cyclase. This chain is Thromboxane A2 receptor (TBXA2R), found in Chlorocebus aethiops (Green monkey).